The chain runs to 305 residues: RNA-binding protein with serine-rich domain 1 (305 aa).

Over residues 1–10 the composition is skewed to basic residues; the sequence is MDLSGVKKKS. The interval 1–161 is necessary for interaction with SRP54, nuclear localization and exon-skipping; sequence MDLSGVKKKS…KRRSPSPKPT (161 aa). A disordered region spans residues 1-170; that stretch reads MDLSGVKKKS…TKVHIGRLTR (170 aa). The necessary for interaction with the cleaved p110 isoform of CDC2L1 stretch occupies residues 1–220; it reads MDLSGVKKKS…ENPDEAEKAL (220 aa). Glycyl lysine isopeptide (Lys-Gly) (interchain with G-Cter in SUMO2) cross-links involve residues Lys-7 and Lys-15. Over residues 33-59 the composition is skewed to basic and acidic residues; sequence DRSDEKSKDRSKDKGTTKESSEKDRGR. Ser-53 carries the post-translational modification Phosphoserine. Residues 68–126 show a composition bias toward low complexity; the sequence is ASSGSSSTRSRSSSTSSSGSSTSTGSSSGSSSSSASSRSGSSSTSRSSSSSSSSGSPSP. Residues 69-121 form a necessary for interactions with UPF2 and UPF3B and UPF2-dependent NMD region; the sequence is SSGSSSTRSRSSSTSSSGSSTSTGSSSGSSSSSASSRSGSSSTSRSSSSSSSS. Composition is skewed to basic residues over residues 127 to 143 and 151 to 167; these read SRRR…KSKP and RKRR…HIGR. Ser-155 and Ser-157 each carry phosphoserine. Residues 156–242 are necessary for interaction with PNN and exon-skipping; the sequence is PSPKPTKVHI…ITATAVLAPW (87 aa). Residues 159–244 are interaction with SAP18 and ACIN1; it reads KPTKVHIGRL…ATAVLAPWPR (86 aa). A Phosphothreonine modification is found at Thr-161. The 80-residue stretch at 161 to 240 folds into the RRM domain; sequence TKVHIGRLTR…QEITATAVLA (80 aa). Lys-218 is subject to N6-acetyllysine. A necessary for interaction with TRA2B, nuclear localization and exon-skipping region spans residues 238–305; it reads VLAPWPRPPP…RSRSSSNSSR (68 aa). The segment at 240-305 is disordered; that stretch reads APWPRPPPRR…RSRSSSNSSR (66 aa). Positions 242–262 are enriched in pro residues; sequence WPRPPPRRFSPPRRMLPPPPM. Positions 266–298 are enriched in basic residues; that stretch reads SPPRMRRRSRSPRRRSPVRRRSRSPGRRRHRSR.

It belongs to the splicing factor SR family. Found in mRNA splicing-dependent exon junction complexes (EJC). Found in a post-splicing complex with NXF1, RBM8A, UPF1, UPF2, UPF3A, UPF3B and RNPS1. Component of the heterotrimeric ASAP (apoptosis- and splicing-associated protein) and PSAP complexes consisting of RNPS1, SAP18 and either ACIN1 or PNN, respectively; the ASAP and PSAP complexes probably are formed mutually exclusive. Component of the active spliceosome. Associates with polysomes. Interacts with the cleaved p110 isoform of CDC2L1, CSNK2A1, PNN, SART3, SRP54, SRRM1 and TRA2B/SFRS10. Post-translationally, phosphorylated on one or more of the four Ser/Thr residues (Ser-43, Thr-49, Ser-52 or Ser-53). Ser-53 phosphorylation site is important for splicing and translation stimulation activity in vitro.

Its subcellular location is the nucleus. The protein localises to the nucleus speckle. It localises to the cytoplasm. In terms of biological role, part of pre- and post-splicing multiprotein mRNP complexes. Auxiliary component of the splicing-dependent multiprotein exon junction complex (EJC) deposited at splice junction on mRNAs. The EJC is a dynamic structure consisting of core proteins and several peripheral nuclear and cytoplasmic associated factors that join the complex only transiently either during EJC assembly or during subsequent mRNA metabolism. Component of the ASAP and PSAP complexes which bind RNA in a sequence-independent manner and are proposed to be recruited to the EJC prior to or during the splicing process and to regulate specific excision of introns in specific transcription subsets. The ASAP complex can inhibit RNA processing during in vitro splicing reactions. The ASAP complex promotes apoptosis and is disassembled after induction of apoptosis. Enhances the formation of the ATP-dependent A complex of the spliceosome. Involved in both constitutive splicing and, in association with SRP54 and TRA2B/SFRS10, in distinctive modulation of alternative splicing in a substrate-dependent manner. Involved in the splicing modulation of BCL2L1/Bcl-X (and probably other apoptotic genes); specifically inhibits formation of proapoptotic isoforms such as Bcl-X(S); the activity is different from the established EJC assembly and function. Participates in mRNA 3'-end cleavage. Involved in UPF2-dependent nonsense-mediated decay (NMD) of mRNAs containing premature stop codons. Also mediates increase of mRNA abundance and translational efficiency. Binds spliced mRNA 20-25 nt upstream of exon-exon junctions. The polypeptide is RNA-binding protein with serine-rich domain 1 (Rnps1) (Rattus norvegicus (Rat)).